The chain runs to 431 residues: MITDRVSDYLEKIEKSDVNAFIDVNSEKVLKEAEELEKNDDLKNKPLYGKIVAVKSNINVKGYKISCASKTLEKYVGTYDATVVKKLRSQGALIVGMTNMDEFAGGSSGETSCYGPTKNPAALDRIPGGSSSGSAAAVAADLCDMAIGSDTGGSIRNPASHCGIVGFKPSYGVVSRQGLCDLAMSFDQIGPLTKNAEDALVLTNAIKGIDRSDSTSLETPKFEKKDISNYKVGVVKEFMDVTDEKIRNEIEKGIEVFKDMGCKIVDLSYKYIDLALPTYYLINYVEFFSATRKYDGRRYGEFIEEACGEEVLRRILIGKHISEQEFSGKYYKKALQARKSMKKEMLGLFNSADLIVGPTVPKLPHKLGEDLSPMEMYAYDVLTVPTNICGICSGVVRCGNISGVPVGLQIQGAPLEDEKVLSAMIEFEKNY.

Active-site charge relay system residues include K55 and S130. The Acyl-ester intermediate role is filled by S154.

The protein belongs to the amidase family. GatA subfamily. In terms of assembly, heterotrimer of A, B and C subunits.

It catalyses the reaction L-glutamyl-tRNA(Gln) + L-glutamine + ATP + H2O = L-glutaminyl-tRNA(Gln) + L-glutamate + ADP + phosphate + H(+). In terms of biological role, allows the formation of correctly charged Gln-tRNA(Gln) through the transamidation of misacylated Glu-tRNA(Gln) in organisms which lack glutaminyl-tRNA synthetase. The reaction takes place in the presence of glutamine and ATP through an activated gamma-phospho-Glu-tRNA(Gln). The protein is Glutamyl-tRNA(Gln) amidotransferase subunit A of Methanococcus maripaludis (strain C5 / ATCC BAA-1333).